The chain runs to 350 residues: Methionine aminopeptidase 1D, chloroplastic/mitochondrial (350 aa).

A chloroplast and mitochondrion-targeting transit peptide spans 1–49; it reads MAGVKSLQPRLISSFLGNNSIRSTQPLIHLFRFDLGRRHVSMQLSRTFS. Gly50 carries the N-acetylglycine modification. The segment at 71–90 is disordered; it reads RLRPGNVSPRRPVPGHITKP. His180 contacts substrate. A divalent metal cation-binding residues include Asp197, Asp208, and His271. Substrate is bound at residue His278. A divalent metal cation is bound by residues Glu303 and Glu334.

It belongs to the peptidase M24A family. Methionine aminopeptidase type 1 subfamily. It depends on Co(2+) as a cofactor. The cofactor is Zn(2+). Mn(2+) is required as a cofactor. Fe(2+) serves as cofactor. In terms of tissue distribution, ubiquitous. Preferentially expressed in green tissues.

It localises to the plastid. It is found in the chloroplast. The protein resides in the mitochondrion. It carries out the reaction Release of N-terminal amino acids, preferentially methionine, from peptides and arylamides.. Removes the N-terminal methionine from nascent proteins. The N-terminal methionine is often cleaved when the second residue in the primary sequence is small and uncharged (Met-Ala-, Cys, Gly, Pro, Ser, Thr, or Val). This Arabidopsis thaliana (Mouse-ear cress) protein is Methionine aminopeptidase 1D, chloroplastic/mitochondrial (MAP1D).